A 644-amino-acid chain; its full sequence is Macrolide export ATP-binding/permease protein MacB (644 aa).

The ABC transporter domain occupies 4 to 242 (IECKNINRYF…SNVGRIREKA (239 aa)). Position 40 to 47 (40 to 47 (GQSGSGKS)) interacts with ATP. 4 helical membrane-spanning segments follow: residues 270-290 (LLTM…VALG), 524-544 (IALI…LVSV), 574-594 (LICV…SLVF), and 607-627 (AMSV…FGFM).

It belongs to the ABC transporter superfamily. Macrolide exporter (TC 3.A.1.122) family. Homodimer.

It is found in the cell inner membrane. In terms of biological role, non-canonical ABC transporter that contains transmembrane domains (TMD), which form a pore in the inner membrane, and an ATP-binding domain (NBD), which is responsible for energy generation. Confers resistance against macrolides. This Neisseria meningitidis serogroup B (strain ATCC BAA-335 / MC58) protein is Macrolide export ATP-binding/permease protein MacB.